Consider the following 318-residue polypeptide: MAAQGCAASRLLQLLLQLLLLLLLLAAGGARARWRGEGTSAHLRDIFLGRCAEYRALLSPEQRNKNCTAIWEAFKVALDKDPCSVLPSDYDLFINLSRHSIPRDKSLFWENSHLLVNSFADNTRRFMPLSDVLYGRVADFLSWCRQKNDSGLDYQSCPTSEDCENNPVDSFWKRASIQYSKDSSGVIHVMLNGSEPTGAYPIKGFFADYEIPNLQKEKITRIEIWVMHEIGGPNVESCGEGSMKVLEKRLKDMGFQYSCINDYRPVKLLQCVDHSTHPDCALKSAAAATQRKAPSLYTEQRAGLIIPLFLVLASRTQL.

An N-terminal signal peptide occupies residues 1-32 (MAAQGCAASRLLQLLLQLLLLLLLLAAGGARA). 3 disulfide bridges follow: Cys-51–Cys-67, Cys-83–Cys-163, and Cys-144–Cys-157. N-linked (GlcNAc...) asparagine glycosylation is found at Asn-66 and Asn-95. Trp-109 contacts NAD(+). Trp-109 provides a ligand contact to nicotinamide. A glycan (N-linked (GlcNAc...) asparagine) is linked at Asn-148. Trp-172 is an NAD(+) binding site. Asn-192 carries N-linked (GlcNAc...) asparagine glycosylation. An NAD(+)-binding site is contributed by Glu-210. Intrachain disulfides connect Cys-238–Cys-259 and Cys-271–Cys-280. The GPI-anchor amidated alanine moiety is linked to residue Ala-293. Residues 294 to 318 (PSLYTEQRAGLIIPLFLVLASRTQL) constitute a propeptide, removed in mature form.

The protein belongs to the ADP-ribosyl cyclase family. Homodimer. In terms of tissue distribution, expressed in various tissues including placenta, lung, liver and kidney.

The protein localises to the cell membrane. It catalyses the reaction NAD(+) + H2O = ADP-D-ribose + nicotinamide + H(+). It carries out the reaction NAD(+) = cyclic ADP-beta-D-ribose + nicotinamide + H(+). The catalysed reaction is cyclic ADP-beta-D-ribose + H2O = ADP-D-ribose. Its activity is regulated as follows. ADP-ribosyl cyclase and cADPR hydrolase activities are both activated by Zn(2+) or Mn(2+), and inhibited by Cu(2+), while Mg(2+) and Ca(2+) do not have any significant influence. In terms of biological role, catalyzes both the synthesis of cyclic ADP-beta-D-ribose (cADPR) from NAD(+), and its hydrolysis to ADP-D-ribose (ADPR). Cyclic ADPR is known to serve as an endogenous second messenger that elicits calcium release from intracellular stores, and thus regulates the mobilization of intracellular calcium. May be involved in pre-B-cell growth. In Homo sapiens (Human), this protein is ADP-ribosyl cyclase/cyclic ADP-ribose hydrolase 2 (BST1).